Here is a 297-residue protein sequence, read N- to C-terminus: MKRETFRYRGDMDLDGFLREMERVGALGAGRLGRAARILEKMWSSDDVTVLLTVAGPAVAGGLGELFERLIREGLVDAVITSGANVVHDALDALGGIHVCLGERNVDGYGRVHDTHIPTEAFEKFEHFMREVLSDLSGRVSCRELLWEMGKRLESGFLRAAADEGVPIYSPGILDSMVGLHVWIHSQDHDFHLDLVDDMHHLADLVFEAEELGAIILGGSVPKHFAMGAAMLRGGLDYAVQITMDRPETGSLSGAPLEEGKSWEKVREDAEVATIVGDYLIIFPLLASGVMQRLGIV.

The active-site Nucleophile is the lysine 265.

Belongs to the deoxyhypusine synthase family. It depends on NAD(+) as a cofactor.

The catalysed reaction is [eIF5A protein]-L-lysine + spermidine = [eIF5A protein]-deoxyhypusine + propane-1,3-diamine. It participates in protein modification; eIF5A hypusination. Catalyzes the NAD-dependent oxidative cleavage of spermidine and the subsequent transfer of the butylamine moiety of spermidine to the epsilon-amino group of a specific lysine residue of the eIF-5A precursor protein to form the intermediate deoxyhypusine residue. This is Probable deoxyhypusine synthase from Methanopyrus kandleri (strain AV19 / DSM 6324 / JCM 9639 / NBRC 100938).